The sequence spans 118 residues: MRLMDRLMVKLDGLTKQQKLENITKALLSANNKELANIIRNVIDNNDKDKVFIVNAAINLGLSPDYMLMNCYYLLDYAIMKNDIPVIVTLIEKGANINRRKYSDCSHLHLCAQDIIMY.

The ANK repeat unit spans residues 70–99; sequence NCYYLLDYAIMKNDIPVIVTLIEKGANINR.

In Acanthamoeba polyphaga (Amoeba), this protein is Putative ankyrin repeat protein R747.